We begin with the raw amino-acid sequence, 317 residues long: Probable cell division protein WhiA (317 aa).

Residues 281–314 (TLKELGEMINPPIGKSGVNHRLRKLDQIADRERG) constitute a DNA-binding region (H-T-H motif).

It belongs to the WhiA family.

Functionally, involved in cell division and chromosome segregation. This is Probable cell division protein WhiA from Alkaliphilus metalliredigens (strain QYMF).